Consider the following 131-residue polypeptide: Small ribosomal subunit protein bS16 (131 aa).

The segment at 87 to 131 is disordered; sequence PGAEGTYRVPTANTKPPRIPGGGAAKAVEAPAEAPAEAETPASES. Low complexity predominate over residues 111–131; it reads AKAVEAPAEAPAEAETPASES.

The protein belongs to the bacterial ribosomal protein bS16 family.

This chain is Small ribosomal subunit protein bS16, found in Kineococcus radiotolerans (strain ATCC BAA-149 / DSM 14245 / SRS30216).